Consider the following 311-residue polypeptide: Putative pyruvate, phosphate dikinase regulatory protein (311 aa).

180–187 (GVSRSSKT) serves as a coordination point for ADP.

The protein belongs to the pyruvate, phosphate/water dikinase regulatory protein family. PDRP subfamily.

The catalysed reaction is N(tele)-phospho-L-histidyl/L-threonyl-[pyruvate, phosphate dikinase] + ADP = N(tele)-phospho-L-histidyl/O-phospho-L-threonyl-[pyruvate, phosphate dikinase] + AMP + H(+). The enzyme catalyses N(tele)-phospho-L-histidyl/O-phospho-L-threonyl-[pyruvate, phosphate dikinase] + phosphate + H(+) = N(tele)-phospho-L-histidyl/L-threonyl-[pyruvate, phosphate dikinase] + diphosphate. Bifunctional serine/threonine kinase and phosphorylase involved in the regulation of the pyruvate, phosphate dikinase (PPDK) by catalyzing its phosphorylation/dephosphorylation. This Paramagnetospirillum magneticum (strain ATCC 700264 / AMB-1) (Magnetospirillum magneticum) protein is Putative pyruvate, phosphate dikinase regulatory protein.